The primary structure comprises 356 residues: MFS-type transporter tazK (356 aa).

9 consecutive transmembrane segments (helical) span residues Leu12–His32, Phe42–Phe62, Gly69–Thr89, Met102–Leu122, Ile178–Val198, Gly211–Phe231, Leu257–Thr277, Ile288–Tyr308, and Ala320–Pro340.

This sequence belongs to the major facilitator superfamily. CAR1 family.

It is found in the membrane. In terms of biological role, MFS-type transporter; part of the gene cluster that mediates the biosynthesis of azaterrilone A and other azaphilones, a class of fungal metabolites characterized by a highly oxygenated pyrano-quinone bicyclic core and exhibiting a broad range of bioactivities. The protein is MFS-type transporter tazK of Aspergillus terreus (strain NIH 2624 / FGSC A1156).